Here is a 1001-residue protein sequence, read N- to C-terminus: Copper-transporting ATPase RAN1 (1001 aa).

Positions 1-21 are disordered; it reads MAPSRRDLQLTPVTGGSSSQI. Residues 1 to 298 are Cytoplasmic-facing; sequence MAPSRRDLQL…TGEASNMFRR (298 aa). A compositionally biased stretch (polar residues) spans 11–21; sequence TPVTGGSSSQI. 2 HMA domains span residues 56–122 and 133–199; these read RKIQ…FEAE and LVGQ…FEGS. Cys-67, Cys-70, Cys-144, and Cys-147 together coordinate Cu(+). Positions 207–273 constitute an HMA 3; degenerate domain; that stretch reads DKLVLRVDGI…GIEEDGFGKF (67 aa). The helical transmembrane segment at 299-320 threads the bilayer; sequence FISSLVLSIPLFFIQVICPHIA. The Extracellular portion of the chain corresponds to 321–338; the sequence is LFDALLVWRCGPFMMGDW. A helical transmembrane segment spans residues 339 to 358; sequence LKWALVSVIQFVIGKRFYVA. Residues 359–365 lie on the Cytoplasmic side of the membrane; the sequence is AWRALRN. A helical transmembrane segment spans residues 366-386; the sequence is GSTNMDVLVALGTSASYFYSV. Topologically, residues 387-403 are extracellular; sequence GALLYGAVTGFWSPTYF. A helical membrane pass occupies residues 404 to 424; it reads DASAMLITFVLLGKYLESLAK. The Cytoplasmic portion of the chain corresponds to 425–558; the sequence is GKTSDAMKKL…KAPIQKFADY (134 aa). Residues 559-581 traverse the membrane as a helical segment; it reads VASIFVPVVITLALFTLVGWSIG. Residues 582 to 602 lie on the Extracellular side of the membrane; that stretch reads GAVGAYPDEWLPENGTHFVFS. The helical transmembrane segment at 603-620 threads the bilayer; sequence LMFSISVVVIACPCALGL. Over 621-931 the chain is Cytoplasmic; the sequence is ATPTAVMVAT…DLSRKTLTRI (311 aa). The active-site 4-aspartylphosphate intermediate is the Asp-658. Asp-877 and Asp-881 together coordinate Mg(2+). A helical transmembrane segment spans residues 932–951; it reads RLNYVFAMAYNVVSIPIAAG. The Extracellular segment spans residues 952 to 963; sequence VFFPVLRVQLPP. The chain crosses the membrane as a helical span at residues 964 to 982; it reads WAAGACMALSSVSVVCSSL. Residues 983-1001 lie on the Cytoplasmic side of the membrane; that stretch reads LLRRYKKPRLTTVLKITTE.

Belongs to the cation transport ATPase (P-type) (TC 3.A.3) family. Type IB subfamily.

The protein localises to the membrane. It catalyses the reaction Cu(+)(in) + ATP + H2O = Cu(+)(out) + ADP + phosphate + H(+). Its function is as follows. Involved in copper import into the cell. Essential for ethylene signaling, which requires copper. Acts by delivering copper to create functional hormone receptors. This chain is Copper-transporting ATPase RAN1 (RAN1), found in Arabidopsis thaliana (Mouse-ear cress).